We begin with the raw amino-acid sequence, 695 residues long: Hypersensitivity response secretion protein HrpI (695 aa).

Helical transmembrane passes span 21-38 (LVGA…ITPL), 45-61 (VLIA…IMLA), 68-92 (LAFS…VSTT), 111-135 (FVVG…FLVI), 203-223 (AIAS…IGVL), 244-262 (GLIA…GMII), and 311-327 (VFIT…LLQL).

This sequence belongs to the FHIPEP (flagella/HR/invasion proteins export pore) family.

The protein resides in the cell inner membrane. In terms of biological role, involved in the secretion of harpin-pss; a proteinaceous elicitor of the hypersensitivity response in plants. This is Hypersensitivity response secretion protein HrpI (hrpI) from Pseudomonas syringae pv. syringae.